A 120-amino-acid polypeptide reads, in one-letter code: Lysozyme (120 aa).

A C-type lysozyme domain is found at 1–120; sequence KRFTRCGLVN…NHSNPDISSC (120 aa). 4 disulfides stabilise this stretch: Cys-6-Cys-120, Cys-27-Cys-110, Cys-62-Cys-76, and Cys-72-Cys-90. Residues Glu-32 and Asp-50 contribute to the active site.

It belongs to the glycosyl hydrolase 22 family. As to quaternary structure, monomer.

The enzyme catalyses Hydrolysis of (1-&gt;4)-beta-linkages between N-acetylmuramic acid and N-acetyl-D-glucosamine residues in a peptidoglycan and between N-acetyl-D-glucosamine residues in chitodextrins.. In terms of biological role, lysozymes have primarily a bacteriolytic function; those in tissues and body fluids are associated with the monocyte-macrophage system and enhance the activity of immunoagents. In Antheraea mylitta (Tasar silkworm), this protein is Lysozyme.